We begin with the raw amino-acid sequence, 231 residues long: Large ribosomal subunit protein uL1 (231 aa).

It belongs to the universal ribosomal protein uL1 family. Part of the 50S ribosomal subunit.

Binds directly to 23S rRNA. The L1 stalk is quite mobile in the ribosome, and is involved in E site tRNA release. Functionally, protein L1 is also a translational repressor protein, it controls the translation of the L11 operon by binding to its mRNA. This is Large ribosomal subunit protein uL1 from Alcanivorax borkumensis (strain ATCC 700651 / DSM 11573 / NCIMB 13689 / SK2).